The primary structure comprises 192 residues: MEQQTAYSLKQSIIFSHKFAQLSKALWKSVEKDWQTWIKPFNLNINEHHILWITYHLDGASISDIAKFGVMHVSTAFNFSKKLEERGLLTFSKREHDKRNTYVDLTEQGRELFLETLEAYKPSTYSVYGGALPIKDLYGKFPEFSELLSIVRHVYGPDFIDMFETALTRLEDGFIEEDGKLKAVDSETKSTV.

The HTH marR-type domain occupies 12–156 (SIIFSHKFAQ…LLSIVRHVYG (145 aa)). Residues 62–85 (ISDIAKFGVMHVSTAFNFSKKLEE) constitute a DNA-binding region (H-T-H motif).

Homodimer.

Negative regulator of protease production and sporulation. In Halalkalibacterium halodurans (strain ATCC BAA-125 / DSM 18197 / FERM 7344 / JCM 9153 / C-125) (Bacillus halodurans), this protein is HTH-type transcriptional regulator Hpr.